The following is a 222-amino-acid chain: Iron-sulfur cluster repair protein YtfE (222 aa).

Belongs to the RIC family. YtfE subfamily. Homodimer.

It localises to the cytoplasm. Di-iron-containing protein involved in the repair of iron-sulfur clusters damaged by oxidative and nitrosative stress conditions. In Musicola paradisiaca (strain Ech703) (Dickeya paradisiaca), this protein is Iron-sulfur cluster repair protein YtfE.